A 182-amino-acid chain; its full sequence is Autophagy-related protein 31 (182 aa).

The interval 105 to 134 (LTSGNDTGGDAGKKSGDISDPAAGPDVPRE) is disordered.

It localises to the cytoplasm. Its subcellular location is the cytoskeleton. The protein localises to the preautophagosomal structure. Plays a role in starvation-induced autophagy. Involved in mitophagy. Functions with ATG17 and ATG29 at the preautophagosomal structure (PAS) in order to form normal autophagosomes under starvation conditions. May be involved in microtubule function, such as chromosome segregation and karyogamy. This chain is Autophagy-related protein 31 (CIS1), found in Candida glabrata (strain ATCC 2001 / BCRC 20586 / JCM 3761 / NBRC 0622 / NRRL Y-65 / CBS 138) (Yeast).